Consider the following 72-residue polypeptide: Rubredoxin (72 aa).

The region spanning 19-72 is the Rubredoxin-like domain; it reads DAVLECKICWQRYDPAEGDPVWQIPPGTPFAALPAHWRCPRCDGDREQFMVVDG. Fe cation-binding residues include Cys24, Cys27, Cys57, and Cys60.

This sequence belongs to the rubredoxin family. Fe(3+) is required as a cofactor.

Its function is as follows. Rubredoxin is a small nonheme, iron protein lacking acid-labile sulfide. Its single Fe, chelated to 4 Cys, functions as an electron acceptor and may also stabilize the conformation of the molecule. Could be involved in hydrogenase-linked redox processes. This chain is Rubredoxin (hoxR), found in Azotobacter vinelandii.